The primary structure comprises 570 residues: Periplasmic trehalase (570 aa).

Positions methionine 1–alanine 34 are cleaved as a signal peptide. Residues arginine 159, tryptophan 166–aspartate 167, asparagine 203, arginine 212–glutamine 214, arginine 284–glutamate 286, and glycine 317 each bind substrate. Catalysis depends on proton donor/acceptor residues aspartate 319 and glutamate 503. Residue glutamate 518 participates in substrate binding. The interval proline 545 to glutamine 570 is disordered. The segment covering proline 554 to glutamine 570 has biased composition (low complexity).

It belongs to the glycosyl hydrolase 37 family. Monomer.

It localises to the periplasm. The catalysed reaction is alpha,alpha-trehalose + H2O = alpha-D-glucose + beta-D-glucose. In terms of biological role, provides the cells with the ability to utilize trehalose at high osmolarity by splitting it into glucose molecules that can subsequently be taken up by the phosphotransferase-mediated uptake system. The protein is Periplasmic trehalase of Salmonella agona (strain SL483).